The primary structure comprises 252 residues: 2-succinyl-6-hydroxy-2,4-cyclohexadiene-1-carboxylate synthase (252 aa).

The protein belongs to the AB hydrolase superfamily. MenH family. Monomer.

It catalyses the reaction 5-enolpyruvoyl-6-hydroxy-2-succinyl-cyclohex-3-ene-1-carboxylate = (1R,6R)-6-hydroxy-2-succinyl-cyclohexa-2,4-diene-1-carboxylate + pyruvate. It participates in quinol/quinone metabolism; 1,4-dihydroxy-2-naphthoate biosynthesis; 1,4-dihydroxy-2-naphthoate from chorismate: step 3/7. The protein operates within quinol/quinone metabolism; menaquinone biosynthesis. Its function is as follows. Catalyzes a proton abstraction reaction that results in 2,5-elimination of pyruvate from 2-succinyl-5-enolpyruvyl-6-hydroxy-3-cyclohexene-1-carboxylate (SEPHCHC) and the formation of 2-succinyl-6-hydroxy-2,4-cyclohexadiene-1-carboxylate (SHCHC). The protein is 2-succinyl-6-hydroxy-2,4-cyclohexadiene-1-carboxylate synthase of Klebsiella pneumoniae (strain 342).